The primary structure comprises 230 residues: Ribonuclease 3 (230 aa).

In terms of domain architecture, RNase III spans 10–133; that stretch reads DPRLLSRIGY…IIGAIYLDSG (124 aa). E46 is a binding site for Mg(2+). The active site involves D50. Positions 119 and 122 each coordinate Mg(2+). Residue E122 is part of the active site. Residues 161–230 form the DRBM domain; it reads DPKSRLQEYL…AAEILKLLEQ (70 aa).

The protein belongs to the ribonuclease III family. Homodimer. The cofactor is Mg(2+).

It localises to the cytoplasm. The catalysed reaction is Endonucleolytic cleavage to 5'-phosphomonoester.. Its function is as follows. Digests double-stranded RNA. Involved in the processing of primary rRNA transcript to yield the immediate precursors to the large and small rRNAs (23S and 16S). Processes some mRNAs, and tRNAs when they are encoded in the rRNA operon. Processes pre-crRNA and tracrRNA of type II CRISPR loci if present in the organism. The protein is Ribonuclease 3 (rnc) of Acinetobacter pittii (strain PHEA-2).